The following is a 39-amino-acid chain: Natriuretic peptide TcNPa (39 aa).

Positions serine 1 to isoleucine 8 are excised as a propeptide. A disulfide bond links cysteine 12 and cysteine 28. Threonine 35 carries O-linked (GalNAc...) threonine glycosylation.

It belongs to the natriuretic peptide family. Post-translationally, O-linked glycans consist of galactosyl-beta(1-3)-N-acetylgalactosamine (Gal-GalNAc). The synthetic non-glycosylated form shows higher potency on natriuretic receptors (EC(50)=672.90 nM) and NPR2 (EC(50)=261.0 nM). In terms of tissue distribution, expressed by the venom gland.

It is found in the secreted. Functionally, snake venom natriuretic peptide that targets both NPR1 (EC(50)=1080.0 nM) and NPR2 (EC(50)=328.60 nM). Exhibits hypotensive and vasodepressor activities. This chain is Natriuretic peptide TcNPa, found in Tropidechis carinatus (Australian rough-scaled snake).